Consider the following 778-residue polypeptide: Molybdenum cofactor sulfurase (778 aa).

Residue K235 is modified to N6-(pyridoxal phosphate)lysine. C399 is a catalytic residue. Disordered regions lie at residues 576-596 (LSKN…SRVC) and 654-673 (ARPA…DTEK). Residues 584–594 (RSSSSRSRSSR) are compositionally biased toward low complexity. The region spanning 651–778 (LPTARPALPG…ETAERARSRL (128 aa)) is the MOSC domain.

It belongs to the class-V pyridoxal-phosphate-dependent aminotransferase family. MOCOS subfamily. Pyridoxal 5'-phosphate serves as cofactor.

The catalysed reaction is Mo-molybdopterin + L-cysteine + AH2 = thio-Mo-molybdopterin + L-alanine + A + H2O. The protein operates within cofactor biosynthesis; molybdopterin biosynthesis. Its function is as follows. Sulfurates the molybdenum cofactor. Sulfation of molybdenum is essential for xanthine dehydrogenase (XDH) and aldehyde oxidase (ADO) enzymes in which molybdenum cofactor is liganded by 1 oxygen and 1 sulfur atom in active form. The chain is Molybdenum cofactor sulfurase from Chaetomium globosum (strain ATCC 6205 / CBS 148.51 / DSM 1962 / NBRC 6347 / NRRL 1970) (Soil fungus).